A 423-amino-acid chain; its full sequence is UPF0229 protein PLES_05841 (423 aa).

The tract at residues 84 to 107 is disordered; it reads AGEHIARPSGGGGGRGGGKASNSG. Positions 92–102 are enriched in gly residues; that stretch reads SGGGGGRGGGK.

The protein belongs to the UPF0229 family.

The chain is UPF0229 protein PLES_05841 from Pseudomonas aeruginosa (strain LESB58).